We begin with the raw amino-acid sequence, 501 residues long: Aldehyde dehydrogenase 1A1 (501 aa).

An N-acetylserine modification is found at Ser2. Residues Lys91 and Lys128 each carry the N6-acetyllysine modification. Residues 167 to 170 (IPWN), 193 to 196 (KPAE), 226 to 227 (GP), and 246 to 247 (GS) each bind NAD(+). Position 252 is an N6-acetyllysine (Lys252). The Proton acceptor role is filled by Glu269. An NAD(+)-binding site is contributed by 269-271 (ELG). Cys303 (nucleophile) is an active-site residue. Positions 336–501 (LTQGINQGPQ…VAMKISQKNS (166 aa)) are mediates interaction with PRMT3. A Phosphothreonine modification is found at Thr337. Position 349–353 (349–353 (EQHDK)) interacts with NAD(+). N6-acetyllysine is present on residues Lys353 and Lys367. 400-402 (EIF) contributes to the NAD(+) binding site. Lys410 carries the post-translational modification N6-acetyllysine. Position 413 is a phosphoserine (Ser413). N6-acetyllysine is present on residues Lys419, Lys435, and Lys495.

Belongs to the aldehyde dehydrogenase family. In terms of assembly, homotetramer. Interacts with PRMT3; the interaction is direct, inhibits ALDH1A1 aldehyde dehydrogenase activity and is independent of the methyltransferase activity of PRMT3. The N-terminus is blocked most probably by acetylation. Strongly expressed in kidney, lung, testis, intestine, stomach, and trachea, but weakly in the liver.

Its subcellular location is the cytoplasm. It localises to the cytosol. The protein localises to the cell projection. It is found in the axon. The catalysed reaction is an aldehyde + NAD(+) + H2O = a carboxylate + NADH + 2 H(+). It catalyses the reaction all-trans-retinal + NAD(+) + H2O = all-trans-retinoate + NADH + 2 H(+). It carries out the reaction 9-cis-retinal + NAD(+) + H2O = 9-cis-retinoate + NADH + 2 H(+). The enzyme catalyses 11-cis-retinal + NAD(+) + H2O = 11-cis-retinoate + NADH + 2 H(+). The catalysed reaction is 13-cis-retinal + NAD(+) + H2O = 13-cis-retinoate + NADH + 2 H(+). It catalyses the reaction 3-deoxyglucosone + NAD(+) + H2O = 2-dehydro-3-deoxy-D-gluconate + NADH + 2 H(+). It carries out the reaction (E)-4-hydroxynon-2-enal + NAD(+) + H2O = (E)-4-hydroxynon-2-enoate + NADH + 2 H(+). The enzyme catalyses malonaldehyde + NAD(+) + H2O = 3-oxopropanoate + NADH + 2 H(+). The catalysed reaction is hexanal + NAD(+) + H2O = hexanoate + NADH + 2 H(+). It catalyses the reaction propanal + NAD(+) + H2O = propanoate + NADH + 2 H(+). It carries out the reaction acetaldehyde + NAD(+) + H2O = acetate + NADH + 2 H(+). The enzyme catalyses benzaldehyde + NAD(+) + H2O = benzoate + NADH + 2 H(+). The catalysed reaction is 4-aminobutanal + NAD(+) + H2O = 4-aminobutanoate + NADH + 2 H(+). It functions in the pathway cofactor metabolism; retinol metabolism. With respect to regulation, inhibited by chloral hydrate. Its function is as follows. Cytosolic dehydrogenase that catalyzes the irreversible oxidation of a wide range of aldehydes to their corresponding carboxylic acid. Functions downstream of retinol dehydrogenases and catalyzes the oxidation of retinaldehyde into retinoic acid, the second step in the oxidation of retinol/vitamin A into retinoic acid. This pathway is crucial to control the levels of retinol and retinoic acid, two important molecules which excess can be teratogenic and cytotoxic. Also oxidizes aldehydes resulting from lipid peroxidation like (E)-4-hydroxynon-2-enal/HNE, malonaldehyde and hexanal that form protein adducts and are highly cytotoxic. By participating for instance to the clearance of (E)-4-hydroxynon-2-enal/HNE in the lens epithelium prevents the formation of HNE-protein adducts and lens opacification. Functions also downstream of fructosamine-3-kinase in the fructosamine degradation pathway by catalyzing the oxidation of 3-deoxyglucosone, the carbohydrate product of fructosamine 3-phosphate decomposition, which is itself a potent glycating agent that may react with lysine and arginine side-chains of proteins. Also has an aminobutyraldehyde dehydrogenase activity and is probably part of an alternative pathway for the biosynthesis of GABA/4-aminobutanoate in midbrain, thereby playing a role in GABAergic synaptic transmission. The protein is Aldehyde dehydrogenase 1A1 of Rattus norvegicus (Rat).